Consider the following 64-residue polypeptide: Conotoxin Cal6.26 (64 aa).

The first 22 residues, 1-22 (MKLTCVMIVAVLVLTVCKVVTS), serve as a signal peptide directing secretion. Cystine bridges form between C32–C50, C40–C54, and C49–C60.

Expressed by the venom duct.

It is found in the secreted. In terms of biological role, probable neurotoxin. The polypeptide is Conotoxin Cal6.26 (Californiconus californicus (California cone)).